Consider the following 174-residue polypeptide: N-terminal acetyltransferase B complex catalytic subunit NAA20 (174 aa).

The region spanning 2–151 is the N-acetyltransferase domain; it reads TTIRRFSCND…DGLDMRKALS (150 aa).

Belongs to the acetyltransferase family. ARD1 subfamily.

The enzyme catalyses N-terminal L-methionyl-L-asparaginyl-[protein] + acetyl-CoA = N-terminal N(alpha)-acetyl-L-methionyl-L-asparaginyl-[protein] + CoA + H(+). It catalyses the reaction N-terminal L-methionyl-L-glutaminyl-[protein] + acetyl-CoA = N-terminal N(alpha)-acetyl-L-methionyl-L-glutaminyl-[protein] + CoA + H(+). It carries out the reaction N-terminal L-methionyl-L-aspartyl-[protein] + acetyl-CoA = N-terminal N(alpha)-acetyl-L-methionyl-L-aspartyl-[protein] + CoA + H(+). The catalysed reaction is N-terminal L-methionyl-L-glutamyl-[protein] + acetyl-CoA = N-terminal N(alpha)-acetyl-L-methionyl-L-glutamyl-[protein] + CoA + H(+). Its function is as follows. Catalytic subunit of the NatB N-alpha-acetyltransferase complex. Involved in plant immunity through the regulation of SNC1 stability. The sequence is that of N-terminal acetyltransferase B complex catalytic subunit NAA20 from Arabidopsis thaliana (Mouse-ear cress).